The sequence spans 434 residues: Enolase (434 aa).

Glutamine 163 serves as a coordination point for (2R)-2-phosphoglycerate. Glutamate 205 acts as the Proton donor in catalysis. Residues aspartate 243, glutamate 291, and aspartate 318 each contribute to the Mg(2+) site. Positions 343, 372, 373, and 394 each coordinate (2R)-2-phosphoglycerate. Residue lysine 343 is the Proton acceptor of the active site.

It belongs to the enolase family. Mg(2+) is required as a cofactor.

It is found in the cytoplasm. The protein resides in the secreted. The protein localises to the cell surface. The catalysed reaction is (2R)-2-phosphoglycerate = phosphoenolpyruvate + H2O. The protein operates within carbohydrate degradation; glycolysis; pyruvate from D-glyceraldehyde 3-phosphate: step 4/5. Its function is as follows. Catalyzes the reversible conversion of 2-phosphoglycerate (2-PG) into phosphoenolpyruvate (PEP). It is essential for the degradation of carbohydrates via glycolysis. The sequence is that of Enolase from Fusobacterium nucleatum subsp. nucleatum (strain ATCC 25586 / DSM 15643 / BCRC 10681 / CIP 101130 / JCM 8532 / KCTC 2640 / LMG 13131 / VPI 4355).